Consider the following 704-residue polypeptide: Elongation factor G (704 aa).

The 277-residue stretch at 9–285 folds into the tr-type G domain; it reads AKVRNIGIMA…AIVAYLPSPL (277 aa). GTP-binding positions include 18–25, 82–86, and 136–139; these read AHIDAGKT, DTPGH, and NKMD.

It belongs to the TRAFAC class translation factor GTPase superfamily. Classic translation factor GTPase family. EF-G/EF-2 subfamily.

It localises to the cytoplasm. Its function is as follows. Catalyzes the GTP-dependent ribosomal translocation step during translation elongation. During this step, the ribosome changes from the pre-translocational (PRE) to the post-translocational (POST) state as the newly formed A-site-bound peptidyl-tRNA and P-site-bound deacylated tRNA move to the P and E sites, respectively. Catalyzes the coordinated movement of the two tRNA molecules, the mRNA and conformational changes in the ribosome. This Thermobifida fusca (strain YX) protein is Elongation factor G.